We begin with the raw amino-acid sequence, 384 residues long: WD repeat-containing protein 74 (384 aa).

6 WD repeats span residues 40–80 (RREE…FLSQ), 83–122 (CPGGEGTFRGLAQADGTLITCVDSGILRVWCENDKEASSD), 128–168 (KVGP…EPVF), 179–220 (DLRV…RRPV), 224–266 (TYGE…GCLK), and 267–306 (GLAGSVRGLQCHPSKPLLASCGLDRVLRIHRIRNPRGLEH). At Ser214 the chain carries Phosphoserine. Lys311 is subject to N6-methyllysine. The tract at residues 320 to 384 (SGRDNWEDEP…KKKRPGSTSP (65 aa)) is required for nucleolar and nuclear location. The disordered stretch occupies residues 323 to 384 (DNWEDEPQEP…KKKRPGSTSP (62 aa)). Residues 371 to 384 (QRRKKKKRPGSTSP) show a composition bias toward basic residues.

As to quaternary structure, isoform 1 interacts (through WDR repeats) with NVL; the interaction is independent of RNA or pre-60S ribosome particles. Isoform 2 does not interact with NVL. Interacts with MTREX; the interaction dissociation in a late stage of rRNA synthesis is required for appropriate maturation of pre-60S particles and depends on the ATPase activity of NVL.

Its subcellular location is the nucleus. It is found in the nucleolus. Regulatory protein of the MTREX-exosome complex involved in the synthesis of the 60S ribosomal subunit. Participates in an early cleavage of the pre-rRNA processing pathway in cooperation with NVL. Required for blastocyst formation, is necessary for RNA transcription, processing and/or stability during preimplantation development. In Mus musculus (Mouse), this protein is WD repeat-containing protein 74 (Wdr74).